Here is a 166-residue protein sequence, read N- to C-terminus: NAD(P)H-quinone oxidoreductase subunit I, chloroplastic (166 aa).

2 consecutive 4Fe-4S ferredoxin-type domains span residues 55–84 and 95–124; these read GRIH…VDWK and LNYS…MTEE. 8 residues coordinate [4Fe-4S] cluster: Cys-64, Cys-67, Cys-70, Cys-74, Cys-104, Cys-107, Cys-110, and Cys-114.

The protein belongs to the complex I 23 kDa subunit family. NDH is composed of at least 16 different subunits, 5 of which are encoded in the nucleus. The cofactor is [4Fe-4S] cluster.

The protein resides in the plastid. Its subcellular location is the chloroplast thylakoid membrane. It carries out the reaction a plastoquinone + NADH + (n+1) H(+)(in) = a plastoquinol + NAD(+) + n H(+)(out). The enzyme catalyses a plastoquinone + NADPH + (n+1) H(+)(in) = a plastoquinol + NADP(+) + n H(+)(out). Functionally, NDH shuttles electrons from NAD(P)H:plastoquinone, via FMN and iron-sulfur (Fe-S) centers, to quinones in the photosynthetic chain and possibly in a chloroplast respiratory chain. The immediate electron acceptor for the enzyme in this species is believed to be plastoquinone. Couples the redox reaction to proton translocation, and thus conserves the redox energy in a proton gradient. The polypeptide is NAD(P)H-quinone oxidoreductase subunit I, chloroplastic (Lasianthaea macrocephala (Lipochaeta macrocephala)).